The chain runs to 802 residues: Acetyl-CoA decarbonylase/synthase complex subunit alpha (802 aa).

Cys69, Cys72, Cys73, Cys75, Cys80, and Cys90 together coordinate [4Fe-4S] cluster. A CO-binding site is contributed by His113. His246, Cys274, and Cys319 together coordinate [Ni-4Fe-4S] cluster. 4Fe-4S ferredoxin-type domains are found at residues 404–432 and 442–473; these read EELKELADSCVHCLKCEVACPNSLPISEA and SKFELLHDKCIACGRCEYACPKDIDIVNVIEK. [4Fe-4S] cluster-binding residues include Cys413, Cys416, Cys419, Cys423, Cys451, Cys454, Cys457, and Cys461. 3 residues coordinate [Ni-4Fe-4S] cluster: Cys519, Cys548, and Cys583.

The protein belongs to the Ni-containing carbon monoxide dehydrogenase family. In terms of assembly, heterotetramer of two alpha and two epsilon subunits. The ACDS complex is made up of alpha, epsilon, beta, gamma and delta subunits with a probable stoichiometry of (alpha(2)epsilon(2))(4)-beta(8)-(gamma(1)delta(1))(8). [4Fe-4S] cluster is required as a cofactor. The cofactor is [Ni-4Fe-4S] cluster.

The enzyme catalyses CO + 2 oxidized [2Fe-2S]-[ferredoxin] + H2O = 2 reduced [2Fe-2S]-[ferredoxin] + CO2 + 2 H(+). It participates in one-carbon metabolism; methanogenesis from acetate. Part of the ACDS complex that catalyzes the reversible cleavage of acetyl-CoA, allowing growth on acetate as sole source of carbon and energy. The alpha-epsilon subcomponent functions as a carbon monoxide dehydrogenase. The chain is Acetyl-CoA decarbonylase/synthase complex subunit alpha from Methanococcoides burtonii (strain DSM 6242 / NBRC 107633 / OCM 468 / ACE-M).